Here is a 698-residue protein sequence, read N- to C-terminus: Interleukin-17 receptor C (698 aa).

The signal sequence occupies residues 1 to 21 (MPVSWFLLSLALGRNPVVVSL). Topologically, residues 22–464 (ERLMEPQDTA…CPMDKYIHRR (443 aa)) are extracellular. Asn-182 carries an N-linked (GlcNAc...) asparagine glycan. A disulfide bond links Cys-190 and Cys-202. N-linked (GlcNAc...) asparagine glycans are attached at residues Asn-209, Asn-249, Asn-255, and Asn-259. 6 disulfides stabilise this stretch: Cys-266/Cys-316, Cys-268/Cys-284, Cys-325/Cys-334, Cys-364/Cys-378, Cys-406/Cys-413, and Cys-440/Cys-455. Residues 465-485 (WVLVWLACLLLAAALFFFLLL) traverse the membrane as a helical segment. The Cytoplasmic segment spans residues 486–698 (KKDRRKAARG…WDLGPCTTLE (213 aa)). An SEFIR domain is found at 496 to 645 (SRTALLLHSA…LPSQLPAFLD (150 aa)).

As to quaternary structure, homodimer; disulfide-linked. Heterodimer with IL17RA. Heterodimerization with IL17RA is independent of the cytoplasmic tail. Associates with non-glycosylated IL17RA constitutively. Binding of IL17A and IL17F induces association with glycosylated IL17RA. Forms complexes with 2:1 binding stoichiometry: two receptor chains for one interleukin molecule. IL17A homodimer preferentially drives the formation of IL17RA-IL17RC heterodimeric receptor complex, whereas IL17F homodimer forms predominantly complexes with IL17RC homodimer. IL17A-IL17F forms complexes with IL17RA-IL17RC, but with lower affinity when compared to IL17A homodimer. IL17RC chain cannot distinguish between IL17A and IL17F molecules, potentially enabling the formation of topologically distinct complexes. Interacts (through SEFIR domain and extended downstream region) with TRAF3IP2/ACT1 (phosphorylated). Highly expressed in colonic epithelial cells. Expressed in lung epithelial cells. Expressed in macrophages. Highly expressed in B-1a B cells and at a lower extent in B-1b and B-2 B cells (at protein level).

Its subcellular location is the cell membrane. Functionally, receptor for IL17A and IL17F, major effector cytokines of innate and adaptive immune system involved in antimicrobial host defense and maintenance of tissue integrity. Receptor for IL17A and IL17F homodimers as part of a heterodimeric complex with IL17RA. Receptor for the heterodimer formed by IL17A and IL17B as part of a heterodimeric complex with IL17RA. Has also been shown to be the cognate receptor for IL17F and to bind IL17A with high affinity without the need for IL17RA. Upon binding of IL17F homodimer triggers downstream activation of TRAF6 and NF-kappa-B signaling pathway. Induces transcriptional activation of IL33, a potent cytokine that stimulates group 2 innate lymphoid cells and adaptive T-helper 2 cells involved in pulmonary allergic response to fungi. Promotes sympathetic innervation of peripheral organs by coordinating the communication between gamma-delta T cells and parenchymal cells. Stimulates sympathetic innervation of thermogenic adipose tissue by driving TGFB1 expression. Binding of IL17A-IL17F to IL17RA-IL17RC heterodimeric receptor complex triggers homotypic interaction of IL17RA and IL17RC chains with TRAF3IP2 adapter through SEFIR domains. This leads to downstream TRAF6-mediated activation of NF-kappa-B and MAPkinase pathways ultimately resulting in transcriptional activation of cytokines, chemokines, antimicrobial peptides and matrix metalloproteinases, with potential strong immune inflammation. Primarily induces neutrophil activation and recruitment at infection and inflammatory sites. Stimulates the production of antimicrobial beta-defensins DEFB1, DEFB103A, and DEFB104A by mucosal epithelial cells, limiting the entry of microbes through the epithelial barriers. This Mus musculus (Mouse) protein is Interleukin-17 receptor C (Il17rc).